Here is a 447-residue protein sequence, read N- to C-terminus: Glucose-6-phosphate isomerase (447 aa).

Glu287 functions as the Proton donor in the catalytic mechanism. Active-site residues include His308 and Lys422.

The protein belongs to the GPI family.

It localises to the cytoplasm. The catalysed reaction is alpha-D-glucose 6-phosphate = beta-D-fructose 6-phosphate. The protein operates within carbohydrate biosynthesis; gluconeogenesis. It participates in carbohydrate degradation; glycolysis; D-glyceraldehyde 3-phosphate and glycerone phosphate from D-glucose: step 2/4. Functionally, catalyzes the reversible isomerization of glucose-6-phosphate to fructose-6-phosphate. The sequence is that of Glucose-6-phosphate isomerase from Heliobacterium modesticaldum (strain ATCC 51547 / Ice1).